The primary structure comprises 429 residues: Adenosylhomocysteinase (429 aa).

Residues threonine 64, aspartate 136, and glutamate 161 each contribute to the substrate site. 162–164 provides a ligand contact to NAD(+); sequence TTT. Residues lysine 191 and aspartate 195 each coordinate substrate. NAD(+) contacts are provided by residues asparagine 196, 225–230, glutamate 248, asparagine 283, 304–306, and asparagine 351; these read GYGWCG and SGH.

It belongs to the adenosylhomocysteinase family. The cofactor is NAD(+).

Its subcellular location is the cytoplasm. It carries out the reaction S-adenosyl-L-homocysteine + H2O = L-homocysteine + adenosine. The protein operates within amino-acid biosynthesis; L-homocysteine biosynthesis; L-homocysteine from S-adenosyl-L-homocysteine: step 1/1. Its function is as follows. May play a key role in the regulation of the intracellular concentration of adenosylhomocysteine. This is Adenosylhomocysteinase from Gloeothece citriformis (strain PCC 7424) (Cyanothece sp. (strain PCC 7424)).